A 114-amino-acid polypeptide reads, in one-letter code: Protein U68 (114 aa).

This sequence belongs to the herpesviridae UL96 family.

The sequence is that of Protein U68 (U68) from Homo sapiens (Human).